The sequence spans 538 residues: CWF19-like protein 1 (538 aa).

The interval 298–324 is disordered; it reads QGRKRSSTGRDSKSSPHPKQPRKPPQP.

It belongs to the CWF19 family. In terms of tissue distribution, expressed in many brain regions, including cerebellum, thalamus and occipital, parietal and temporal lobes (at protein level). Also expressed in the spinal cord (at protein level).

The protein is CWF19-like protein 1 (CWF19L1) of Homo sapiens (Human).